The primary structure comprises 57 residues: Small ribosomal subunit protein eS27 (57 aa).

Residues Cys-10, Cys-13, Cys-29, and Cys-32 each contribute to the Zn(2+) site. The C4-type zinc finger occupies 10 to 32 (CDDCENEQVLFGKAANTVNCAVC).

It belongs to the eukaryotic ribosomal protein eS27 family. In terms of assembly, part of the 30S ribosomal subunit. Zn(2+) is required as a cofactor.

This Natronomonas pharaonis (strain ATCC 35678 / DSM 2160 / CIP 103997 / JCM 8858 / NBRC 14720 / NCIMB 2260 / Gabara) (Halobacterium pharaonis) protein is Small ribosomal subunit protein eS27.